Here is a 265-residue protein sequence, read N- to C-terminus: Selenoprotein Pb (265 aa).

The first 18 residues, 1 to 18 (MQALWPLLLSALPALLGA), serve as a signal peptide directing secretion. Asn-28 carries an N-linked (GlcNAc...) asparagine glycan. Residue Sec-64 is a non-standard amino acid, selenocysteine. N-linked (GlcNAc...) asparagine glycosylation is found at Asn-88, Asn-178, Asn-184, and Asn-207. A disordered region spans residues 188–265 (SESSDSTKND…SHQEHVHNHR (78 aa)). Polar residues predominate over residues 201-211 (ENNQRPNSTEP). A compositionally biased stretch (basic residues) spans 215-231 (AHHHHHQQHEPHHHHHN). Residues 239–265 (KSGDSDVTGKPKEPPHHSHQEHVHNHR) show a composition bias toward basic and acidic residues.

Its subcellular location is the secreted. In terms of biological role, might be responsible for some of the extracellular antioxidant defense properties of selenium. The chain is Selenoprotein Pb (sepp1b) from Danio rerio (Zebrafish).